The following is a 146-amino-acid chain: 3-dehydroquinate dehydratase (146 aa).

The Proton acceptor role is filled by Tyr-24. Substrate-binding residues include Asn-73, His-79, and Asp-86. The active-site Proton donor is the His-99. Residues 100–101 (LS) and Arg-110 each bind substrate.

This sequence belongs to the type-II 3-dehydroquinase family. In terms of assembly, homododecamer.

The enzyme catalyses 3-dehydroquinate = 3-dehydroshikimate + H2O. The protein operates within metabolic intermediate biosynthesis; chorismate biosynthesis; chorismate from D-erythrose 4-phosphate and phosphoenolpyruvate: step 3/7. Its function is as follows. Catalyzes a trans-dehydration via an enolate intermediate. In Shewanella baltica (strain OS195), this protein is 3-dehydroquinate dehydratase.